The primary structure comprises 471 residues: Tryptophanase (471 aa).

An N6-acetyllysine mark is found at lysine 5, lysine 115, and lysine 156. At lysine 270 the chain carries N6-(pyridoxal phosphate)lysine. Residue lysine 450 is modified to N6-acetyllysine.

This sequence belongs to the beta-eliminating lyase family. Homotetramer. Pyridoxal 5'-phosphate serves as cofactor.

The enzyme catalyses L-tryptophan + H2O = indole + pyruvate + NH4(+). It participates in amino-acid degradation; L-tryptophan degradation via pyruvate pathway; indole and pyruvate from L-tryptophan: step 1/1. This Escherichia fergusonii (strain ATCC 35469 / DSM 13698 / CCUG 18766 / IAM 14443 / JCM 21226 / LMG 7866 / NBRC 102419 / NCTC 12128 / CDC 0568-73) protein is Tryptophanase.